The primary structure comprises 443 residues: Xaa-Pro dipeptidase (443 aa).

The Mn(2+) site is built by Asp-246, Asp-257, His-339, Glu-384, and Glu-423.

The protein belongs to the peptidase M24B family. Bacterial-type prolidase subfamily. Mn(2+) is required as a cofactor.

The enzyme catalyses Xaa-L-Pro dipeptide + H2O = an L-alpha-amino acid + L-proline. Functionally, splits dipeptides with a prolyl residue in the C-terminal position. The sequence is that of Xaa-Pro dipeptidase from Salmonella paratyphi B (strain ATCC BAA-1250 / SPB7).